Reading from the N-terminus, the 71-residue chain is Ceratotoxin-A (71 aa).

An N-terminal signal peptide occupies residues 1 to 23 (MANLKAVFLICIVAFIAFQCVVA). Propeptides lie at residues 24 to 35 (EPAAEDSIVVKR) and 65 to 71 (VAAGLVG).

As to quaternary structure, homomer of four to six subunits.

The protein localises to the secreted. In terms of biological role, female-specific peptides with potent activity against Gram-positive and Gram-negative bacteria. They have as well hemolytic activity. In Ceratitis capitata (Mediterranean fruit fly), this protein is Ceratotoxin-A (CTXA2).